A 980-amino-acid chain; its full sequence is Macrophage colony-stimulating factor 1 receptor (980 aa).

An N-terminal signal peptide occupies residues 1-19 (MGPRALLVLLVATAWHAQG). Residues 20-514 (VPVIQPSGPE…QLPDELLFTP (495 aa)) lie on the Extracellular side of the membrane. Ig-like C2-type domains are found at residues 21-100 (PVIQ…IHLY), 107-197 (PWKV…KVQK), 202-297 (PATL…RVVE), 299-397 (AYLN…LTLR), and 400-499 (PEVR…WPIS). Cys-42 and Cys-84 form a disulfide bridge. Residues Asn-45, Asn-73, Asn-94, Asn-153, Asn-275, Asn-286, Asn-302, Asn-335, Asn-410, Asn-477, and Asn-490 are each glycosylated (N-linked (GlcNAc...) asparagine). Cystine bridges form between Cys-127/Cys-177 and Cys-224/Cys-278. Cys-417 and Cys-482 are disulfide-bonded. Residues 515 to 535 (VLLTCMSIMALLLLLLLLLLY) form a helical membrane-spanning segment. Over 536 to 980 (KYKQKPKYQV…LLQPNNYQFC (445 aa)) the chain is Cytoplasmic. The interval 539–571 (QKPKYQVRWKIIESYEGNSYTFIDPTQLPYNEK) is regulatory juxtamembrane domain. A phosphotyrosine; by autocatalysis mark is found at Tyr-543 and Tyr-558. The Protein kinase domain occupies 579 to 908 (LQFGKTLGAG…PTFQQICSLL (330 aa)). ATP is bound by residues 585 to 593 (LGAGAFGKV) and Lys-613. Phosphotyrosine; by autocatalysis occurs at positions 696 and 705. Ser-710 is modified (phosphoserine). Position 720 is a phosphotyrosine; by autocatalysis (Tyr-720). Residues 723-743 (MRPVSTSSSNDSFSEEDLGKE) are disordered. The active-site Proton acceptor is Asp-776. The tract at residues 794–816 (DFGLARDIMNDSNYIVKGNARLP) is activation loop. Phosphotyrosine; by autocatalysis occurs at positions 807 and 921. A disordered region spans residues 918-959 (VPNYTNLPSSSSSSSSSSSSCRTGSGGGSSSEPEEESSSEHL). Residues 926-940 (SSSSSSSSSSSSCRT) are compositionally biased toward low complexity. The residue at position 977 (Tyr-977) is a Phosphotyrosine; by autocatalysis.

Belongs to the protein kinase superfamily. Tyr protein kinase family. CSF-1/PDGF receptor subfamily. Monomer. Homodimer. Interacts with CSF1 and IL34. Interaction with dimeric CSF1 or IL34 leads to receptor homodimerization. Interacts with INPPL1/SHIP2 and THOC5. Interacts (tyrosine phosphorylated) with PLCG2 (via SH2 domain). Interacts (tyrosine phosphorylated) with PIK3R1 (via SH2 domain). Interacts (tyrosine phosphorylated) with FYN, YES1 and SRC (via SH2 domain). Interacts (tyrosine phosphorylated) with CBL, GRB2 and SLA2. In terms of processing, autophosphorylated in response to CSF1 or IL34 binding. Phosphorylation at Tyr-558 is important for normal down-regulation of signaling by ubiquitination, internalization and degradation. Phosphorylation at Tyr-558 and Tyr-807 is important for interaction with SRC family members, including FYN, YES1 and SRC, and for subsequent activation of these protein kinases. Phosphorylation at Tyr-696 and Tyr-921 is important for interaction with GRB2. Phosphorylation at Tyr-720 is important for interaction with PIK3R1. Phosphorylation at Tyr-720 and Tyr-807 is important for interaction with PLCG2. Phosphorylation at Tyr-977 is important for interaction with CBL. Dephosphorylation by PTPN2 negatively regulates downstream signaling and macrophage differentiation. Post-translationally, ubiquitinated. Becomes rapidly polyubiquitinated after autophosphorylation, leading to its degradation.

The protein localises to the cell membrane. The enzyme catalyses L-tyrosyl-[protein] + ATP = O-phospho-L-tyrosyl-[protein] + ADP + H(+). With respect to regulation, present in an inactive conformation in the absence of bound ligand. CSF1 or IL34 binding leads to dimerization and activation by autophosphorylation on tyrosine residues. Its function is as follows. Tyrosine-protein kinase that acts as a cell-surface receptor for CSF1 and IL34 and plays an essential role in the regulation of survival, proliferation and differentiation of hematopoietic precursor cells, especially mononuclear phagocytes, such as macrophages and monocytes. Promotes the release of pro-inflammatory chemokines in response to IL34 and CSF1, and thereby plays an important role in innate immunity and in inflammatory processes. Plays an important role in the regulation of osteoclast proliferation and differentiation, the regulation of bone resorption, and is required for normal bone and tooth development. Required for normal male and female fertility, and for normal development of milk ducts and acinar structures in the mammary gland during pregnancy. Promotes reorganization of the actin cytoskeleton, regulates formation of membrane ruffles, cell adhesion and cell migration, and promotes cancer cell invasion. Activates several signaling pathways in response to ligand binding, including the ERK1/2 and the JNK pathway. Phosphorylates PIK3R1, PLCG2, GRB2, SLA2 and CBL. Activation of PLCG2 leads to the production of the cellular signaling molecules diacylglycerol and inositol 1,4,5-trisphosphate, that then lead to the activation of protein kinase C family members, especially PRKCD. Phosphorylation of PIK3R1, the regulatory subunit of phosphatidylinositol 3-kinase, leads to activation of the AKT1 signaling pathway. Activated CSF1R also mediates activation of the MAP kinases MAPK1/ERK2 and/or MAPK3/ERK1, and of the SRC family kinases SRC, FYN and YES1. Activated CSF1R transmits signals both via proteins that directly interact with phosphorylated tyrosine residues in its intracellular domain, or via adapter proteins, such as GRB2. Promotes activation of STAT family members STAT3, STAT5A and/or STAT5B. Promotes tyrosine phosphorylation of SHC1 and INPP5D/SHIP-1. Receptor signaling is down-regulated by protein phosphatases, such as INPP5D/SHIP-1, that dephosphorylate the receptor and its downstream effectors, and by rapid internalization of the activated receptor. In the central nervous system, may play a role in the development of microglia macrophages. This chain is Macrophage colony-stimulating factor 1 receptor (CSF1R), found in Felis catus (Cat).